The sequence spans 228 residues: ATP-dependent dethiobiotin synthetase BioD (228 aa).

14-19 lines the ATP pocket; sequence DAGKTL. Thr18 serves as a coordination point for Mg(2+). The active site involves Lys39. ATP contacts are provided by residues Asp56, 117 to 120, and 206 to 208; these read EGAG and PRL. Residues Asp56 and Glu117 each coordinate Mg(2+).

It belongs to the dethiobiotin synthetase family. Homodimer. Requires Mg(2+) as cofactor.

The protein localises to the cytoplasm. It carries out the reaction (7R,8S)-7,8-diammoniononanoate + CO2 + ATP = (4R,5S)-dethiobiotin + ADP + phosphate + 3 H(+). It functions in the pathway cofactor biosynthesis; biotin biosynthesis; biotin from 7,8-diaminononanoate: step 1/2. Catalyzes a mechanistically unusual reaction, the ATP-dependent insertion of CO2 between the N7 and N8 nitrogen atoms of 7,8-diaminopelargonic acid (DAPA, also called 7,8-diammoniononanoate) to form a ureido ring. The polypeptide is ATP-dependent dethiobiotin synthetase BioD (Cellvibrio japonicus (strain Ueda107) (Pseudomonas fluorescens subsp. cellulosa)).